The chain runs to 268 residues: uncharacterized protein (268 aa).

A signal peptide spans 1–18 (MRGFLLLSLGVFSFSALA). 2 domain regions span residues 24-184 (SHDL…ELLP) and 185-268 (SPAT…NWLR). A disulfide bridge connects residues Cys-110 and Cys-115.

In terms of assembly, monomer.

It is found in the periplasm. This is an uncharacterized protein from Pseudomonas aeruginosa (strain ATCC 15692 / DSM 22644 / CIP 104116 / JCM 14847 / LMG 12228 / 1C / PRS 101 / PAO1).